Consider the following 3106-residue polypeptide: Probable polyketide synthase 29 (3106 aa).

Residues 1-11 (MVQNTDNTRNS) are compositionally biased toward polar residues. Positions 1–20 (MVQNTDNTRNSKLIRDRNDY) are disordered. In terms of domain architecture, Ketosynthase family 3 (KS3) spans 28-461 (SGDIAVIGIG…GSNVCLILSE (434 aa)). Catalysis depends on for beta-ketoacyl synthase activity residues Cys200, His339, and His384. The segment at 661-694 (GVSADIIIGHSLGEVSSPYCSGMIDFQTLCYLTY) is acyl/malonyl transferase. Ser671 (for acyl/malonyl transferase activity) is an active-site residue. Positions 961–1082 (PSIHGLGNNT…GNFSLTKHNS (122 aa)) are N-terminal hotdog fold. The PKS/mFAS DH domain maps to 961–1266 (PSIHGLGNNT…CALVSLDSNP (306 aa)). The Proton acceptor; for dehydratase activity role is filled by His994. The tract at residues 1099-1266 (NFTSISKQDF…CALVSLDSNP (168 aa)) is C-terminal hotdog fold. Residue Asp1171 is the Proton donor; for dehydratase activity of the active site. Residues 2533 to 2610 (NNNEIIRSTI…QSIEIILSAH (78 aa)) form the Carrier domain. Ser2570 bears the O-(pantetheine 4'-phosphoryl)serine mark. Residues 2609-2656 (AHNNNNKNNNNNNNINNNNKNNNNNNNKNNNNINNNINNNKNNNNNNN) are a coiled coil. Positions 2614-2656 (NKNNNNNNNINNNNKNNNNNNNKNNNNINNNINNNKNNNNNNN) are disordered.

The cofactor is pantetheine 4'-phosphate.

Its function is as follows. Probable polyketide synthase. The polypeptide is Probable polyketide synthase 29 (pks29) (Dictyostelium discoideum (Social amoeba)).